Reading from the N-terminus, the 754-residue chain is tRNA 5-methylaminomethyl-2-thiouridine biosynthesis bifunctional protein MnmC (754 aa).

The tract at residues Met1–Ser320 is tRNA (mnm(5)s(2)U34)-methyltransferase. The tract at residues Ile324–Cys754 is FAD-dependent cmnm(5)s(2)U34 oxidoreductase.

In the N-terminal section; belongs to the methyltransferase superfamily. tRNA (mnm(5)s(2)U34)-methyltransferase family. It in the C-terminal section; belongs to the DAO family. The cofactor is FAD.

The protein localises to the cytoplasm. The catalysed reaction is 5-aminomethyl-2-thiouridine(34) in tRNA + S-adenosyl-L-methionine = 5-methylaminomethyl-2-thiouridine(34) in tRNA + S-adenosyl-L-homocysteine + H(+). Its function is as follows. Catalyzes the last two steps in the biosynthesis of 5-methylaminomethyl-2-thiouridine (mnm(5)s(2)U) at the wobble position (U34) in tRNA. Catalyzes the FAD-dependent demodification of cmnm(5)s(2)U34 to nm(5)s(2)U34, followed by the transfer of a methyl group from S-adenosyl-L-methionine to nm(5)s(2)U34, to form mnm(5)s(2)U34. The protein is tRNA 5-methylaminomethyl-2-thiouridine biosynthesis bifunctional protein MnmC of Shewanella denitrificans (strain OS217 / ATCC BAA-1090 / DSM 15013).